The primary structure comprises 341 residues: Hyaluronan and proteoglycan link protein 2 (341 aa).

The N-terminal stretch at 1–27 (MPSWIPLPAFCCLLLPWAFTVFHKTLG) is a signal peptide. The Ig-like V-type domain maps to 35 to 143 (PHYLLPPIHE…GIEDESVALT (109 aa)). 5 disulfide bridges follow: Cys-58–Cys-129, Cys-171–Cys-241, Cys-195–Cys-216, Cys-266–Cys-337, and Cys-291–Cys-312. 2 consecutive Link domains span residues 149-243 (VVFP…FCFT) and 246-339 (LAGQ…YCYA).

The protein belongs to the HAPLN family. As to expression, brain.

It localises to the secreted. Its subcellular location is the extracellular space. The protein localises to the extracellular matrix. Mediates a firm binding of versican V2 to hyaluronic acid. May play a pivotal role in the formation of the hyaluronan-associated matrix in the central nervous system (CNS) which facilitates neuronal conduction and general structural stabilization. Binds to hyaluronic acid. The chain is Hyaluronan and proteoglycan link protein 2 (Hapln2) from Rattus norvegicus (Rat).